We begin with the raw amino-acid sequence, 282 residues long: Bis(5'-nucleosyl)-tetraphosphatase, symmetrical (282 aa).

The protein belongs to the Ap4A hydrolase family.

It carries out the reaction P(1),P(4)-bis(5'-adenosyl) tetraphosphate + H2O = 2 ADP + 2 H(+). Functionally, hydrolyzes diadenosine 5',5'''-P1,P4-tetraphosphate to yield ADP. In Paraburkholderia phymatum (strain DSM 17167 / CIP 108236 / LMG 21445 / STM815) (Burkholderia phymatum), this protein is Bis(5'-nucleosyl)-tetraphosphatase, symmetrical.